Consider the following 335-residue polypeptide: 2,4-dienoyl-CoA reductase [(3E)-enoyl-CoA-producing], mitochondrial (335 aa).

The transit peptide at 1–34 directs the protein to the mitochondrion; the sequence is MKLPARVFFTLGSRLPCGLAPRRFFSYGTKILYQ. N6-acetyllysine; alternate is present on residues K42 and K49. An N6-succinyllysine; alternate mark is found at K42 and K49. 66 to 71 contributes to the NADP(+) binding site; the sequence is GGGTGL. Residue T69 is modified to Phosphothreonine. K73 carries the post-translational modification N6-succinyllysine. Residue R91 participates in NADP(+) binding. R91 is a binding site for substrate. K97 is modified (N6-acetyllysine; alternate). K97 is subject to N6-succinyllysine; alternate. Residue D117 coordinates NADP(+). Residues R119, F149, and S157 each coordinate substrate. The active-site Proton acceptor is the Y199. K214 serves as a coordination point for NADP(+). Residue K230 is modified to N6-acetyllysine. 240–243 lines the NADP(+) pocket; the sequence is PGPI. At K244 the chain carries N6-acetyllysine; alternate. Position 244 is an N6-succinyllysine; alternate (K244). A substrate-binding site is contributed by R251. Residues K260 and K319 each carry the N6-acetyllysine; alternate modification. An N6-succinyllysine; alternate mark is found at K260 and K319.

Belongs to the short-chain dehydrogenases/reductases (SDR) family. 2,4-dienoyl-CoA reductase subfamily. As to quaternary structure, homotetramer. As to expression, heart = liver = pancreas &gt; kidney &gt;&gt; skeletal muscle = lung.

The protein resides in the mitochondrion. The enzyme catalyses a (2E,4E)-dienoyl-CoA + NADPH + H(+) = a 4,5-saturated-(3E)-enoyl-CoA + NADP(+). The catalysed reaction is a (2E,4Z)-dienoyl-CoA + NADPH + H(+) = a 4,5-saturated-(3E)-enoyl-CoA + NADP(+). It catalyses the reaction (2E,4E)-hexadienoyl-CoA + NADPH + H(+) = (3E)-hexenoyl-CoA + NADP(+). In terms of biological role, auxiliary enzyme of beta-oxidation. It participates in the metabolism of unsaturated fatty enoyl-CoA esters having double bonds in both even- and odd-numbered positions in mitochondria. Catalyzes the NADP-dependent reduction of 2,4-dienoyl-CoA to yield trans-3-enoyl-CoA. The protein is 2,4-dienoyl-CoA reductase [(3E)-enoyl-CoA-producing], mitochondrial (DECR1) of Homo sapiens (Human).